We begin with the raw amino-acid sequence, 780 residues long: Cullin-5 (780 aa).

Ser34 is subject to Phosphoserine. The residue at position 210 (Thr210) is a Phosphothreonine. Positions 713 to 772 (LRTRKLYIQIMKMRKKISNAQLQTELVEILKNMFLPQKKMIKEQIEWLIEHKYIRRDESD) constitute a Cullin neddylation domain. Lys724 participates in a covalent cross-link: Glycyl lysine isopeptide (Lys-Gly) (interchain with G-Cter in NEDD8).

Belongs to the cullin family. As to quaternary structure, component of multiple cullin-5-RING E3 ubiquitin-protein ligase complexes (ECS complexes, also named CRL5 complexes) formed of CUL5, Elongin BC (ELOB and ELOC), RNF7/RBX2 and a variable SOCS box domain-containing protein as substrate-specific recognition component. CUL5-containing ECS complexes specifically contain RNF7/RBX2, and not RBX1, as catalytic subunit. Component of the ECS(ASB2) complex with the substrate recognition component ASB2. Component of the ECS(ASB6) complex with the substrate recognition component ASB6. Component of the ECS(ASB7) complex with the substrate recognition component ASB7. Component of the ECS(ASB9) complex with the substrate recognition component ASB9. Component of the ECS(ASB11) complex with the substrate recognition component ASB11. Component of the ECS(ASB12) complex with the substrate recognition component ASB12. Component of the ECS(LRRC41) complex with the substrate recognition component LRRC41. Component of the ECS(SOCS1) complex with the substrate recognition component SOCS1. Component of the ECS(SOCS2) complex with the substrate recognition component SOCS2. Component of the ECS(WSB1) complex with the substrate recognition subunit WSB1. Component of the ECS(SOCS3) complex with the substrate recognition component SOCS3. Component of the ECS(SOCS7) complex with the substrate recognition component SOCS7. Component of the ECS(SPSB1) complex with the substrate recognition component SPSB1. Component of the ECS(SPSB3) complex with the substrate recognition component SPSB3. Component of the ECS(SPSB2) complex with the substrate recognition component SPSB2. Component of the ECS(SPSB4) complex with the substrate recognition component SPSB4. Component of the ECS(RAB40) complex with the substrate recognition subunit RAB40A, RAB40B or RAB40C. Component of the ECS(KLHDC1) complex with the substrate recognition component KLHDC1. Component of the ECS(PCMTD1) complex with the substrate recognition subunit PCMTD1. May also form complexes containing RBX1 and ELOA or VHL; additional evidence is however required to confirm this result in vivo. Interacts (when neddylated) with ARIH2; leading to activate the E3 ligase activity of ARIH2. Interacts with ERCC6; the interaction is induced by DNA damaging agents or inhibitors of RNA polymerase II elongation. Interacts with ELOA (via the BC-box). Interacts (unneddylated form) with DCUN1D1, DCUN1D2, DCUN1D3, DCUN1D4 and DCUN1D5; these interactions promote the cullin neddylation. Neddylated; which enhances the ubiquitination activity of ECS complexes and prevents binding of the inhibitor CAND1. Deneddylated via its interaction with the COP9 signalosome (CSN). In terms of tissue distribution, kidney collecting tubules.

The protein resides in the nucleus. Its pathway is protein modification; protein ubiquitination. Its function is as follows. Core component of multiple cullin-5-RING E3 ubiquitin-protein ligase complexes (ECS complexes, also named CRL5 complexes), which mediate the ubiquitination and subsequent proteasomal degradation of target proteins. Acts a scaffold protein that contributes to catalysis through positioning of the substrate and the ubiquitin-conjugating enzyme. The functional specificity of the E3 ubiquitin-protein ligase complex depends on the variable SOCS box-containing substrate recognition component. Acts as a key regulator of neuron positioning during cortex development: component of various SOCS-containing ECS complexes, such as the ECS(SOCS7) complex, that regulate reelin signaling by mediating ubiquitination and degradation of DAB1. ECS(SOCS1) seems to direct ubiquitination of JAK2. The ECS(SOCS2) complex mediates the ubiquitination and subsequent proteasomal degradation of phosphorylated EPOR and GHR. The ECS(SPSB3) complex catalyzes ubiquitination of nuclear CGAS. ECS(KLHDC1) complex is part of the DesCEND (destruction via C-end degrons) pathway and mediates ubiquitination and degradation of truncated SELENOS selenoprotein produced by failed UGA/Sec decoding, which ends with a glycine. The ECS(ASB9) complex mediates ubiquitination and degradation of CKB. As part of some ECS complex, promotes 'Lys-11'-linked ubiquitination and degradation of BTRC. As part of a multisubunit ECS complex, polyubiquitinates monoubiquitinated POLR2A. As part of the ECS(RAB40C) complex, mediates ANKRD28 ubiquitination and degradation, thereby regulating protein phosphatase 6 (PP6) complex activity and focal adhesion assembly during cell migration. As part of the ECS(RAB40A) complex, mediates RHOU 'Lys-48'-linked ubiquitination and degradation, thus inhibiting focal adhesion disassembly during cell migration. As part of the ECS(RAB40B) complex, mediates LIMA1/EPLIN and RAP2 ubiquitination, thereby regulating actin cytoskeleton dynamics and stress fiber formation during cell migration. May form a cell surface vasopressin receptor. This Oryctolagus cuniculus (Rabbit) protein is Cullin-5 (CUL5).